The sequence spans 318 residues: Vomeronasal type-1 receptor A11 (318 aa).

The Extracellular segment spans residues 1 to 32 (MSEILFFSPQPLFSHMMNKNSRLHTHSNIKNT). The chain crosses the membrane as a helical span at residues 33 to 53 (FFSEIGIGISGNSFLLLFHIL). Over 54-65 (KFIRGHRPRLTD) the chain is Cytoplasmic. A helical transmembrane segment spans residues 66–86 (LPIGLLSLIHLLMLLLMAFIA). Over 87 to 101 (TDIFISRRGWDGIIC) the chain is Extracellular. A disulfide bridge links Cys101 with Cys188. The chain crosses the membrane as a helical span at residues 102-118 (KFLVYLYGVLRGLSLCT). Residues 119–147 (TSMLSVLQAIILSPRSSCLAKLKHKSPHH) lie on the Cytoplasmic side of the membrane. A helical transmembrane segment spans residues 148 to 168 (ISCAIIFLSVLYMLISSHILL). Residues 169–206 (SITATPNLTMNDFLYVSQSCSLLPLSYLVQSMYSTLLA) lie on the Extracellular side of the membrane. N-linked (GlcNAc...) asparagine glycosylation occurs at Asn175. The helical transmembrane segment at 207–227 (LREVFLISLMVLSTLYMVVLL) threads the bilayer. At 228-254 (CRHRKQAQHLQGTSLSPKASAEQRATQ) the chain is on the cytoplasmic side. A helical membrane pass occupies residues 255 to 275 (TILMLMTFFVLMSIFDSIVSC). The Extracellular portion of the chain corresponds to 276–285 (SRTMFLDDPT). Residues 286-306 (SYSIHIFVMHIYATVSPFVFM) form a helical membrane-spanning segment. Residues 307–318 (STEKHIVNILRG) lie on the Cytoplasmic side of the membrane.

It belongs to the G-protein coupled receptor 1 family.

It localises to the cell membrane. In terms of biological role, putative pheromone receptor implicated in the regulation of social and reproductive behavior. The polypeptide is Vomeronasal type-1 receptor A11 (Mus musculus (Mouse)).